The primary structure comprises 517 residues: Lysophosphatidylcholine acyltransferase 2B (517 aa).

A glycan (N-linked (GlcNAc...) asparagine) is linked at Asn-29. A run of 3 helical transmembrane segments spans residues 70–90 (IVFLFLLLWPVALLSTINLPI), 103–123 (LIKPVFIFLLRLAFFCAGFLI), and 137–157 (IFVVAPHSTFFDAIAVIVAGL). The short motif at 143–148 (HSTFFD) is the HXXXXD motif element. 2 EF-hand domains span residues 388-423 (PISEPLRQLFSLFDRNQDGTIDFREYVIGLTVLCNP) and 425-460 (NTEKILQMSFKLFDLDEDGYITEQELTTMLRAAFGV). Residues Asp-401, Asn-403, Asp-405, Thr-407, Glu-412, Asp-438, Asp-440, Asp-442, Tyr-444, and Glu-449 each coordinate Ca(2+).

It belongs to the 1-acyl-sn-glycerol-3-phosphate acyltransferase family.

It localises to the membrane. Its pathway is lipid metabolism; phospholipid metabolism. Probable acetyltransferase. This is Lysophosphatidylcholine acyltransferase 2B (Lpcat2b) from Rattus norvegicus (Rat).